The following is a 306-amino-acid chain: Enoyl-CoA isomerase/hydratase MYCGRDRAFT_76805 (306 aa).

Substrate is bound by residues 103-107 (AGADL) and Gly150.

Belongs to the enoyl-CoA hydratase/isomerase family.

The catalysed reaction is a (3S)-3-hydroxyacyl-CoA = a (2E)-enoyl-CoA + H2O. It carries out the reaction a 4-saturated-(3S)-3-hydroxyacyl-CoA = a (3E)-enoyl-CoA + H2O. Its pathway is siderophore biosynthesis. Its function is as follows. Enoyl-CoA isomerase/hydratase involved in the biosynthesis of a ferrichrome A-like siderophore which may contribute to organismal virulence. The first step of siderophore biosynthesis is performed by the HMG-CoA synthase (HMGS) MYCGRDRAFT_54740 which catalyzes the generation of HMG-CoA and CoA using acetoacetyl-CoA and acetyl-CoA as substrates. The enoyl-CoA isomerase/hydratase MYCGRDRAFT_76805 then catalyzes the conversion of HMG-CoA to methylglutaconyl-CoA. The acyltransferase MYCGRDRAFT_85486 then fuses methylglutaconyl-CoA with hydroxyornithine to yield methylglutaconyl hydroxyornithine. Methylglutaconyl hydroxyornithine is then available for use by the nonribosomal peptide synthetase NRPS2 to generate the ferrichrome A-like siderophore. This Zymoseptoria tritici (strain CBS 115943 / IPO323) (Speckled leaf blotch fungus) protein is Enoyl-CoA isomerase/hydratase MYCGRDRAFT_76805.